Reading from the N-terminus, the 398-residue chain is Protein RecA (398 aa).

83 to 90 (GPESSGKT) lines the ATP pocket. The interval 351-398 (AGQKNDKKSKLEEKANAGAGISEASEPDSSAEEDFEEFAPIDIGSLGE) is disordered. Positions 354–365 (KNDKKSKLEEKA) are enriched in basic and acidic residues. The segment covering 375–389 (SEPDSSAEEDFEEFA) has biased composition (acidic residues).

It belongs to the RecA family.

The protein localises to the cytoplasm. In terms of biological role, can catalyze the hydrolysis of ATP in the presence of single-stranded DNA, the ATP-dependent uptake of single-stranded DNA by duplex DNA, and the ATP-dependent hybridization of homologous single-stranded DNAs. It interacts with LexA causing its activation and leading to its autocatalytic cleavage. The protein is Protein RecA of Ruminococcus albus (strain ATCC 27210 / DSM 20455 / JCM 14654 / NCDO 2250 / 7).